The following is a 1191-amino-acid chain: DNA topoisomerase 2 (1191 aa).

ATP is bound by residues Asn-64, Asn-95, and 142 to 149 (GTNGVGLK). Mg(2+) contacts are provided by Glu-437, Asp-538, and Asp-540. The Topo IIA-type catalytic domain maps to 706–1173 (IPNFLDGMTR…PGASVWLEEI (468 aa)). Tyr-799 (O-(5'-phospho-DNA)-tyrosine intermediate) is an active-site residue.

The protein belongs to the type II topoisomerase family. The cofactor is Mg(2+). Mn(2+) serves as cofactor. Ca(2+) is required as a cofactor.

Its subcellular location is the host cytoplasm. It catalyses the reaction ATP-dependent breakage, passage and rejoining of double-stranded DNA.. Its function is as follows. Type II topoisomerase. Processively relaxes supercoiled DNA. Displays DNA-supercoiling activity only when associated with the viral histone-like protein. The protein is DNA topoisomerase 2 of Ornithodoros (relapsing fever ticks).